The chain runs to 354 residues: UDP-N-acetylglucosamine--N-acetylmuramyl-(pentapeptide) pyrophosphoryl-undecaprenol N-acetylglucosamine transferase (354 aa).

UDP-N-acetyl-alpha-D-glucosamine contacts are provided by residues 11–13 (TAG), arginine 164, serine 194, and glutamine 289.

This sequence belongs to the glycosyltransferase 28 family. MurG subfamily.

The protein resides in the cell membrane. The catalysed reaction is di-trans,octa-cis-undecaprenyl diphospho-N-acetyl-alpha-D-muramoyl-L-alanyl-D-glutamyl-meso-2,6-diaminopimeloyl-D-alanyl-D-alanine + UDP-N-acetyl-alpha-D-glucosamine = di-trans,octa-cis-undecaprenyl diphospho-[N-acetyl-alpha-D-glucosaminyl-(1-&gt;4)]-N-acetyl-alpha-D-muramoyl-L-alanyl-D-glutamyl-meso-2,6-diaminopimeloyl-D-alanyl-D-alanine + UDP + H(+). Its pathway is cell wall biogenesis; peptidoglycan biosynthesis. Functionally, cell wall formation. Catalyzes the transfer of a GlcNAc subunit on undecaprenyl-pyrophosphoryl-MurNAc-pentapeptide (lipid intermediate I) to form undecaprenyl-pyrophosphoryl-MurNAc-(pentapeptide)GlcNAc (lipid intermediate II). This chain is UDP-N-acetylglucosamine--N-acetylmuramyl-(pentapeptide) pyrophosphoryl-undecaprenol N-acetylglucosamine transferase, found in Lachnospira eligens (strain ATCC 27750 / DSM 3376 / VPI C15-48 / C15-B4) (Eubacterium eligens).